Reading from the N-terminus, the 205-residue chain is Small ribosomal subunit protein uS4 (205 aa).

The S4 RNA-binding domain maps to 94–157 (SRLDTVVYRM…KQIALIQESI (64 aa)).

It belongs to the universal ribosomal protein uS4 family. In terms of assembly, part of the 30S ribosomal subunit. Contacts protein S5. The interaction surface between S4 and S5 is involved in control of translational fidelity.

Its function is as follows. One of the primary rRNA binding proteins, it binds directly to 16S rRNA where it nucleates assembly of the body of the 30S subunit. Functionally, with S5 and S12 plays an important role in translational accuracy. This chain is Small ribosomal subunit protein uS4, found in Rickettsia canadensis (strain McKiel).